Here is a 911-residue protein sequence, read N- to C-terminus: Protein translocase subunit SecA (911 aa).

Residues Gln-87, 105–109 (GEGKT), and Asp-512 each bind ATP. Positions 561-571 (RHESRRIDNQL) are enriched in basic and acidic residues. Residues 561-583 (RHESRRIDNQLRGRSGRQGDPGS) form a disordered region. 4 residues coordinate Zn(2+): Cys-895, Cys-897, Cys-906, and His-907.

The protein belongs to the SecA family. As to quaternary structure, monomer and homodimer. Part of the essential Sec protein translocation apparatus which comprises SecA, SecYEG and auxiliary proteins SecDF-YajC and YidC. The cofactor is Zn(2+).

It is found in the cell inner membrane. Its subcellular location is the cytoplasm. It catalyses the reaction ATP + H2O + cellular proteinSide 1 = ADP + phosphate + cellular proteinSide 2.. Its function is as follows. Part of the Sec protein translocase complex. Interacts with the SecYEG preprotein conducting channel. Has a central role in coupling the hydrolysis of ATP to the transfer of proteins into and across the cell membrane, serving both as a receptor for the preprotein-SecB complex and as an ATP-driven molecular motor driving the stepwise translocation of polypeptide chains across the membrane. In Pseudomonas putida (strain W619), this protein is Protein translocase subunit SecA.